A 163-amino-acid chain; its full sequence is Neurotrophin-3 (163 aa).

The N-terminal stretch at 1 to 3 is a signal peptide; sequence IQS. The propeptide occupies 4–119; that stretch reads SSMDQGILTE…VLNRTSRRKR (116 aa). The segment at 36–61 is disordered; sequence QTARTKDGMQTTVKKTEAEADARASQ. A compositionally biased stretch (basic and acidic residues) spans 49–61; that stretch reads KKTEAEADARASQ. Asn112 carries an N-linked (GlcNAc...) asparagine glycan.

Belongs to the NGF-beta family.

Its subcellular location is the secreted. Its function is as follows. Seems to promote the survival of visceral and proprioceptive sensory neurons. The sequence is that of Neurotrophin-3 (NTF3) from Boa constrictor (Boa).